The following is a 320-amino-acid chain: Heterogeneous nuclear ribonucleoprotein A1-like 2 (320 aa).

A globular A domain region spans residues 4–94; sequence SASPKEPEQL…EPKRAVSRED (91 aa). A phosphoserine mark is found at S6 and S22. RRM domains are found at residues 14-97 and 105-184; these read RKLF…DSQR and KKIF…LPKQ. Positions 95–185 are globular B domain; the sequence is SQRPGAHLTV…EVRKALPKQE (91 aa). The segment at 181 to 216 is disordered; sequence LPKQEMASASSSQRGRRGSGNFGGGRGDGFGGNDNF. Asymmetric dimethylarginine; alternate occurs at positions 194, 206, 218, and 225. An omega-N-methylarginine; alternate mark is found at R194, R206, R218, and R225. Residues 198–216 are compositionally biased toward gly residues; sequence GSGNFGGGRGDGFGGNDNF. The RNA-binding RGG-box stretch occupies residues 218–240; that stretch reads RGGNFSGRGGFGGSCGGGGYGGS. A nuclear targeting sequence region spans residues 268–305; that stretch reads NQSSNFGPMKGGNFGGRSSGPYGGGGQYFAKPQNQGGY. The tract at residues 271–320 is disordered; it reads SNFGPMKGGNFGGRSSGPYGGGGQYFAKPQNQGGYGVSSSSSSYGSGRRF. Residues 276 to 294 are compositionally biased toward gly residues; that stretch reads MKGGNFGGRSSGPYGGGGQ. Position 284 is an omega-N-methylarginine (R284). An N6-acetyllysine modification is found at K298. Over residues 307–320 the composition is skewed to low complexity; sequence VSSSSSSYGSGRRF.

The protein resides in the nucleus. Its subcellular location is the cytoplasm. Its function is as follows. Involved in the packaging of pre-mRNA into hnRNP particles, transport of poly(A) mRNA from the nucleus to the cytoplasm and may modulate splice site selection. The sequence is that of Heterogeneous nuclear ribonucleoprotein A1-like 2 (HNRNPA1L2) from Homo sapiens (Human).